We begin with the raw amino-acid sequence, 355 residues long: Putative GPI-anchor transamidase (355 aa).

An N-terminal signal peptide occupies residues 1–24 (MFNIMLVKFVVIFALILASCRVEA). Residues His165 and Cys207 contribute to the active site.

The protein belongs to the peptidase C13 family.

Its pathway is glycolipid biosynthesis; glycosylphosphatidylinositol-anchor biosynthesis. Functionally, mediates GPI anchoring in the endoplasmic reticulum, by replacing a protein's C-terminal GPI attachment signal peptide with a pre-assembled GPI. During this transamidation reaction, the GPI transamidase forms a carbonyl intermediate with the substrate protein. The sequence is that of Putative GPI-anchor transamidase from Drosophila melanogaster (Fruit fly).